The chain runs to 511 residues: Spermatogenesis-associated protein 2 (511 aa).

Residues 77–149 (ALHCAFSMLE…AYKLKELVES (73 aa)) form the PUB domain. A PIM motif motif is present at residues 320–337 (TYFPTQDDVDLYTDSEPR).

It belongs to the SPATA2 family. Interacts (via the PIM motif) with RNF31/HOIP (via the PUB domain); the interaction is direct. Interacts (via the PUB domain) with CYLD; the interaction is direct. As to expression, expressed in the testis and to a lesser extent in the brain, while skeletal muscle and kidney show weak expression.

The protein localises to the cytoplasm. It is found in the nucleus. Functionally, bridging factor that mediates the recruitment of CYLD to the LUBAC complex, thereby regulating TNF-alpha-induced necroptosis. Acts as a direct binding intermediate that bridges RNF31/HOIP, the catalytic subunit of the LUBAC complex, and the deubiquitinase (CYLD), thereby recruiting CYLD to the TNF-R1 signaling complex (TNF-RSC). Required to activate the 'Met-1'- (linear) and 'Lys-63'-linked deubiquitinase activities of CYLD. Controls the kinase activity of RIPK1 and TNF-alpha-induced necroptosis by promoting 'Met-1'-linked deubiquitination of RIPK1 by CYLD. The polypeptide is Spermatogenesis-associated protein 2 (Rattus norvegicus (Rat)).